The sequence spans 296 residues: Pantothenate synthetase (296 aa).

37-44 (MGALHTGH) lines the ATP pocket. The active-site Proton donor is H44. Q68 is a binding site for (R)-pantoate. Q68 lines the beta-alanine pocket. An ATP-binding site is contributed by 160-163 (GQKD). Q166 provides a ligand contact to (R)-pantoate. ATP-binding positions include V189 and 197-200 (TSSR).

Belongs to the pantothenate synthetase family. In terms of assembly, homodimer.

The protein resides in the cytoplasm. The catalysed reaction is (R)-pantoate + beta-alanine + ATP = (R)-pantothenate + AMP + diphosphate + H(+). It functions in the pathway cofactor biosynthesis; (R)-pantothenate biosynthesis; (R)-pantothenate from (R)-pantoate and beta-alanine: step 1/1. Its function is as follows. Catalyzes the condensation of pantoate with beta-alanine in an ATP-dependent reaction via a pantoyl-adenylate intermediate. The sequence is that of Pantothenate synthetase from Thermobifida fusca (strain YX).